Here is a 211-residue protein sequence, read N- to C-terminus: Probable nicotinate-nucleotide adenylyltransferase (211 aa).

This sequence belongs to the NadD family.

The catalysed reaction is nicotinate beta-D-ribonucleotide + ATP + H(+) = deamido-NAD(+) + diphosphate. It participates in cofactor biosynthesis; NAD(+) biosynthesis; deamido-NAD(+) from nicotinate D-ribonucleotide: step 1/1. Its function is as follows. Catalyzes the reversible adenylation of nicotinate mononucleotide (NaMN) to nicotinic acid adenine dinucleotide (NaAD). This is Probable nicotinate-nucleotide adenylyltransferase from Shewanella sediminis (strain HAW-EB3).